Consider the following 198-residue polypeptide: Altered inheritance of mitochondria protein 34, mitochondrial (198 aa).

The N-terminal 55 residues, 1–55 (MSISLLGRIVSQQFSGIRAAGPGRSLYLPFTLLLKQPGAYKVNLHRYVHSTQTKS), are a transit peptide targeting the mitochondrion. The region spanning 69 to 103 (FQKFTVKVLKEQCKSRGLKLSGRKSDLLQRLITHD) is the SAP domain. A helical transmembrane segment spans residues 172-187 (IFLLGFFMLSCLWWNL).

The protein belongs to the AIM34 family.

It localises to the mitochondrion membrane. This Saccharomyces cerevisiae (strain RM11-1a) (Baker's yeast) protein is Altered inheritance of mitochondria protein 34, mitochondrial (AIM34).